The sequence spans 174 residues: MTTILSVRRDGQVVIGGDGQVSLGNTVMKGNARKVRRLYKNQVLAGFAGGTADAFTLFERFEAKLESHNGQLTRAAVELAKDWRTDRSLRRLEALLAVADKEASLIITGNGDVIQPEDDLIAIGSGGMYAQAAARALLENTQLDARNIVEKGLKIAGDICVYTNQNHTIEVLDY.

The active site involves threonine 2. Na(+) is bound by residues glycine 157, cysteine 160, and threonine 163.

This sequence belongs to the peptidase T1B family. HslV subfamily. As to quaternary structure, a double ring-shaped homohexamer of HslV is capped on each side by a ring-shaped HslU homohexamer. The assembly of the HslU/HslV complex is dependent on binding of ATP.

The protein localises to the cytoplasm. The enzyme catalyses ATP-dependent cleavage of peptide bonds with broad specificity.. Allosterically activated by HslU binding. Functionally, protease subunit of a proteasome-like degradation complex believed to be a general protein degrading machinery. This chain is ATP-dependent protease subunit HslV, found in Cellvibrio japonicus (strain Ueda107) (Pseudomonas fluorescens subsp. cellulosa).